Consider the following 119-residue polypeptide: Holo-[acyl-carrier-protein] synthase (119 aa).

D8 and E59 together coordinate Mg(2+).

The protein belongs to the P-Pant transferase superfamily. AcpS family. It depends on Mg(2+) as a cofactor.

It localises to the cytoplasm. It carries out the reaction apo-[ACP] + CoA = holo-[ACP] + adenosine 3',5'-bisphosphate + H(+). Functionally, transfers the 4'-phosphopantetheine moiety from coenzyme A to a Ser of acyl-carrier-protein. The protein is Holo-[acyl-carrier-protein] synthase of Lactococcus lactis subsp. cremoris (strain SK11).